A 253-amino-acid polypeptide reads, in one-letter code: Protein phosphatase CheZ (253 aa).

Residues 1–84 (MTQEELDALM…EWPPPPPTEE (84 aa)) form a disordered region. Basic and acidic residues predominate over residues 21–69 (LETKEETKEEAKEEAKEEAKEEAKEKEEIKEESSSQKMTVKKEDAEKYG).

It belongs to the CheZ family. In terms of assembly, interacts with ChePep; this interaction is essential for each other polar localization.

The protein localises to the cytoplasm. Its function is as follows. Plays an important role in bacterial chemotaxis signal transduction pathway by accelerating the dephosphorylation of phosphorylated CheY (CheY-P). Also dephosphorylates CheV2 but not CheV1 or CheV3. In addition, forms a distinct chemotaxis regulatory complex with ChePep independently of the core chemotaxis signaling proteins. This Helicobacter pylori (strain ATCC 700392 / 26695) (Campylobacter pylori) protein is Protein phosphatase CheZ.